We begin with the raw amino-acid sequence, 1360 residues long: DNA-directed RNA polymerase subunit beta (1360 aa).

It belongs to the RNA polymerase beta chain family. As to quaternary structure, the RNAP catalytic core consists of 2 alpha, 1 beta, 1 beta' and 1 omega subunit. When a sigma factor is associated with the core the holoenzyme is formed, which can initiate transcription.

The catalysed reaction is RNA(n) + a ribonucleoside 5'-triphosphate = RNA(n+1) + diphosphate. Its function is as follows. DNA-dependent RNA polymerase catalyzes the transcription of DNA into RNA using the four ribonucleoside triphosphates as substrates. The chain is DNA-directed RNA polymerase subunit beta from Magnetococcus marinus (strain ATCC BAA-1437 / JCM 17883 / MC-1).